We begin with the raw amino-acid sequence, 339 residues long: NADH-quinone oxidoreductase subunit H (339 aa).

The next 9 helical transmembrane spans lie at 9 to 29 (IFPLIIIALKVVAITIPLILC), 50 to 70 (PNVVGPFGLLQPIADAVKLLF), 82 to 102 (ILFVLAPMITFILSLIGWAVI), 115 to 135 (VGVLYILAISSLSVYGIIIAG), 161 to 181 (MGLVIITVLLTTGTLNLSQIV), 187 to 207 (MPWWIDLMLMPMGVVFFISVL), 235 to 255 (MGFALFFLGEYANMILVSAMT), 275 to 295 (IPGFFWFVFKVGFLLFCFLWI), and 311 to 331 (GWKVFLPLTLFWVVLVSSVLI).

The protein belongs to the complex I subunit 1 family. In terms of assembly, NDH-1 is composed of 14 different subunits. Subunits NuoA, H, J, K, L, M, N constitute the membrane sector of the complex.

It is found in the cell inner membrane. The enzyme catalyses a quinone + NADH + 5 H(+)(in) = a quinol + NAD(+) + 4 H(+)(out). Functionally, NDH-1 shuttles electrons from NADH, via FMN and iron-sulfur (Fe-S) centers, to quinones in the respiratory chain. The immediate electron acceptor for the enzyme in this species is believed to be ubiquinone. Couples the redox reaction to proton translocation (for every two electrons transferred, four hydrogen ions are translocated across the cytoplasmic membrane), and thus conserves the redox energy in a proton gradient. This subunit may bind ubiquinone. This Rickettsia bellii (strain RML369-C) protein is NADH-quinone oxidoreductase subunit H.